We begin with the raw amino-acid sequence, 311 residues long: Putative S-adenosyl-L-methionine-dependent methyltransferase MRA_0152 (311 aa).

S-adenosyl-L-methionine is bound by residues D135 and 164–165 (DL).

It belongs to the UPF0677 family.

Functionally, exhibits S-adenosyl-L-methionine-dependent methyltransferase activity. This Mycobacterium tuberculosis (strain ATCC 25177 / H37Ra) protein is Putative S-adenosyl-L-methionine-dependent methyltransferase MRA_0152.